A 457-amino-acid chain; its full sequence is RuvB-like helicase 1 (457 aa).

Residue 73–80 (GGPSTGKT) coordinates ATP.

It belongs to the RuvB family. In terms of assembly, may form heterododecamers with RVB2. Component of the SWR1 chromatin remodeling complex, the INO80 chromatin remodeling complex, and of the R2TP complex.

Its subcellular location is the nucleus. It carries out the reaction ATP + H2O = ADP + phosphate + H(+). Its function is as follows. DNA helicase which participates in several chromatin remodeling complexes, including the SWR1 and the INO80 complexes. The SWR1 complex mediates the ATP-dependent exchange of histone H2A for the H2A variant HZT1 leading to transcriptional regulation of selected genes by chromatin remodeling. The INO80 complex remodels chromatin by shifting nucleosomes and is involved in DNA repair. Also involved in pre-rRNA processing. This Candida glabrata (strain ATCC 2001 / BCRC 20586 / JCM 3761 / NBRC 0622 / NRRL Y-65 / CBS 138) (Yeast) protein is RuvB-like helicase 1 (RVB1).